The primary structure comprises 424 residues: Enolase (424 aa).

Residue Gln162 participates in (2R)-2-phosphoglycerate binding. Glu204 (proton donor) is an active-site residue. Mg(2+) contacts are provided by Asp241, Glu284, and Asp311. (2R)-2-phosphoglycerate-binding residues include Lys336, Arg365, Ser366, and Lys387. The active-site Proton acceptor is the Lys336.

The protein belongs to the enolase family. Mg(2+) serves as cofactor.

Its subcellular location is the cytoplasm. The protein resides in the secreted. It is found in the cell surface. It carries out the reaction (2R)-2-phosphoglycerate = phosphoenolpyruvate + H2O. The protein operates within carbohydrate degradation; glycolysis; pyruvate from D-glyceraldehyde 3-phosphate: step 4/5. In terms of biological role, catalyzes the reversible conversion of 2-phosphoglycerate (2-PG) into phosphoenolpyruvate (PEP). It is essential for the degradation of carbohydrates via glycolysis. The polypeptide is Enolase (Rhizobium etli (strain ATCC 51251 / DSM 11541 / JCM 21823 / NBRC 15573 / CFN 42)).